Here is a 267-residue protein sequence, read N- to C-terminus: Small ribosomal subunit protein mS23 (267 aa).

The disordered stretch occupies residues 230-267 (VKTASKDGKSSNGSMGAEDVVEKTTSAWETEFVEEESS).

The protein belongs to the mitochondrion-specific ribosomal protein mS23 family. As to quaternary structure, component of the mitochondrial small ribosomal subunit.

The protein resides in the mitochondrion. The sequence is that of Small ribosomal subunit protein mS23 (RSM25) from Meyerozyma guilliermondii (strain ATCC 6260 / CBS 566 / DSM 6381 / JCM 1539 / NBRC 10279 / NRRL Y-324) (Yeast).